We begin with the raw amino-acid sequence, 233 residues long: Small ribosomal subunit protein uS3 (233 aa).

Residues 39 to 107 (VRQYLKKELA…PAQINISEVR (69 aa)) enclose the KH type-2 domain.

It belongs to the universal ribosomal protein uS3 family. In terms of assembly, part of the 30S ribosomal subunit. Forms a tight complex with proteins S10 and S14.

In terms of biological role, binds the lower part of the 30S subunit head. Binds mRNA in the 70S ribosome, positioning it for translation. In Photorhabdus laumondii subsp. laumondii (strain DSM 15139 / CIP 105565 / TT01) (Photorhabdus luminescens subsp. laumondii), this protein is Small ribosomal subunit protein uS3.